The chain runs to 108 residues: UPF0235 protein RPB_0109 (108 aa).

It belongs to the UPF0235 family.

The protein is UPF0235 protein RPB_0109 of Rhodopseudomonas palustris (strain HaA2).